Reading from the N-terminus, the 121-residue chain is Large ribosomal subunit protein bL19 (121 aa).

Belongs to the bacterial ribosomal protein bL19 family.

In terms of biological role, this protein is located at the 30S-50S ribosomal subunit interface and may play a role in the structure and function of the aminoacyl-tRNA binding site. The protein is Large ribosomal subunit protein bL19 of Polaromonas sp. (strain JS666 / ATCC BAA-500).